The sequence spans 105 residues: ATP synthase F(0) complex subunit a (105 aa).

3 consecutive transmembrane segments (helical) span residues 14-34 (EGTP…SLFI), 47-67 (LTAG…LLPM), and 72-92 (AILT…VAMI).

It belongs to the ATPase A chain family. In terms of assembly, component of the ATP synthase complex composed at least of ATP5F1A/subunit alpha, ATP5F1B/subunit beta, ATP5MC1/subunit c (homooctomer), MT-ATP6/subunit a, MT-ATP8/subunit 8, ATP5ME/subunit e, ATP5MF/subunit f, ATP5MG/subunit g, ATP5MK/subunit k, ATP5MJ/subunit j, ATP5F1C/subunit gamma, ATP5F1D/subunit delta, ATP5F1E/subunit epsilon, ATP5PF/subunit F6, ATP5PB/subunit b, ATP5PD/subunit d, ATP5PO/subunit OSCP. ATP synthase complex consists of a soluble F(1) head domain (subunits alpha(3) and beta(3)) - the catalytic core - and a membrane F(0) domain - the membrane proton channel (subunits c, a, 8, e, f, g, k and j). These two domains are linked by a central stalk (subunits gamma, delta, and epsilon) rotating inside the F1 region and a stationary peripheral stalk (subunits F6, b, d, and OSCP). Interacts with DNAJC30; interaction is direct.

Its subcellular location is the mitochondrion inner membrane. It catalyses the reaction H(+)(in) = H(+)(out). Subunit a, of the mitochondrial membrane ATP synthase complex (F(1)F(0) ATP synthase or Complex V) that produces ATP from ADP in the presence of a proton gradient across the membrane which is generated by electron transport complexes of the respiratory chain. ATP synthase complex consist of a soluble F(1) head domain - the catalytic core - and a membrane F(1) domain - the membrane proton channel. These two domains are linked by a central stalk rotating inside the F(1) region and a stationary peripheral stalk. During catalysis, ATP synthesis in the catalytic domain of F(1) is coupled via a rotary mechanism of the central stalk subunits to proton translocation. With the subunit c (ATP5MC1), forms the proton-conducting channel in the F(0) domain, that contains two crucial half-channels (inlet and outlet) that facilitate proton movement from the mitochondrial intermembrane space (IMS) into the matrix. Protons are taken up via the inlet half-channel and released through the outlet half-channel, following a Grotthuss mechanism. This is ATP synthase F(0) complex subunit a from Salmo trutta (Brown trout).